Here is an 88-residue protein sequence, read N- to C-terminus: Auxin-responsive protein SAUR21 (88 aa).

Belongs to the ARG7 family.

It localises to the cell membrane. Its function is as follows. Functions as a positive effector of cell expansion through modulation of auxin transport. In Arabidopsis thaliana (Mouse-ear cress), this protein is Auxin-responsive protein SAUR21.